The following is a 570-amino-acid chain: Sulfite reductase [NADPH] hemoprotein beta-component (570 aa).

Positions 434, 440, 479, and 483 each coordinate [4Fe-4S] cluster. C483 lines the siroheme pocket.

The protein belongs to the nitrite and sulfite reductase 4Fe-4S domain family. In terms of assembly, alpha(8)-beta(8). The alpha component is a flavoprotein, the beta component is a hemoprotein. The cofactor is siroheme. Requires [4Fe-4S] cluster as cofactor.

It catalyses the reaction hydrogen sulfide + 3 NADP(+) + 3 H2O = sulfite + 3 NADPH + 4 H(+). Its pathway is sulfur metabolism; hydrogen sulfide biosynthesis; hydrogen sulfide from sulfite (NADPH route): step 1/1. Component of the sulfite reductase complex that catalyzes the 6-electron reduction of sulfite to sulfide. This is one of several activities required for the biosynthesis of L-cysteine from sulfate. This chain is Sulfite reductase [NADPH] hemoprotein beta-component (cysI), found in Escherichia coli (strain K12).